Consider the following 414-residue polypeptide: 2,3-diketo-5-methylthiopentyl-1-phosphate enolase (414 aa).

Lysine 99 functions as the Proton acceptor in the catalytic mechanism. Residues lysine 148, 174–177 (KDDE), histidine 265, glycine 338, and 360–361 (GG) contribute to the substrate site. Mg(2+)-binding residues include lysine 174, aspartate 176, and glutamate 177. Lysine 174 bears the N6-carboxylysine mark.

The protein belongs to the RuBisCO large chain family. Type IV subfamily. In terms of assembly, homodimer. Mg(2+) is required as a cofactor.

It carries out the reaction 5-methylsulfanyl-2,3-dioxopentyl phosphate = 2-hydroxy-5-methylsulfanyl-3-oxopent-1-enyl phosphate. It participates in amino-acid biosynthesis; L-methionine biosynthesis via salvage pathway; L-methionine from S-methyl-5-thio-alpha-D-ribose 1-phosphate: step 3/6. Functionally, catalyzes the enolization of 2,3-diketo-5-methylthiopentyl-1-phosphate (DK-MTP-1-P) into 2-hydroxy-3-keto-5-methylthiopentenyl-1-phosphate (HK-MTPenyl-1-P). This is 2,3-diketo-5-methylthiopentyl-1-phosphate enolase from Bacillus cereus (strain AH187).